Consider the following 266-residue polypeptide: Putative tyrosine phosphatase 197R (266 aa).

Residues 15–167 (RPTLGSLSDK…LFGSQNINND (153 aa)) form the Tyrosine-protein phosphatase domain. C111 (phosphocysteine intermediate) is an active-site residue.

The protein belongs to the protein-tyrosine phosphatase family.

The catalysed reaction is O-phospho-L-tyrosyl-[protein] + H2O = L-tyrosyl-[protein] + phosphate. The sequence is that of Putative tyrosine phosphatase 197R from Invertebrate iridescent virus 6 (IIV-6).